A 137-amino-acid polypeptide reads, in one-letter code: 2-iminobutanoate/2-iminopropanoate deaminase (137 aa).

N-acetylserine is present on Ser2. Lys13 and Lys67 each carry N6-succinyllysine. A Phosphothreonine modification is found at Thr74. Ser136 carries the phosphoserine modification.

In terms of assembly, homotrimer. Interacts with YTHDF2. As to expression, expressed by various malignant neoplasms.

Its subcellular location is the cytoplasm. It localises to the nucleus. It is found in the peroxisome. The protein resides in the mitochondrion. The enzyme catalyses 2-iminobutanoate + H2O = 2-oxobutanoate + NH4(+). It catalyses the reaction 2-iminopropanoate + H2O = pyruvate + NH4(+). Functionally, catalyzes the hydrolytic deamination of enamine/imine intermediates that form during the course of normal metabolism. May facilitate the release of ammonia from these potentially toxic reactive metabolites, reducing their impact on cellular components. It may act on enamine/imine intermediates formed by several types of pyridoxal-5'-phosphate-dependent dehydratases including L-threonine dehydratase. In terms of biological role, also promotes endoribonucleolytic cleavage of some transcripts by promoting recruitment of the ribonuclease P/MRP complex. Acts by bridging YTHDF2 and the ribonuclease P/MRP complex. RIDA/HRSP12 binds to N6-methyladenosine (m6A)-containing mRNAs containing a 5'-GGUUC-3' motif: cooperative binding of RIDA/HRSP12 and YTHDF2 to such transcripts lead to recruitment of the ribonuclease P/MRP complex and subsequent endoribonucleolytic cleavage. The chain is 2-iminobutanoate/2-iminopropanoate deaminase from Capra hircus (Goat).